The primary structure comprises 163 residues: Nucleotide-binding protein YajQ (163 aa).

It belongs to the YajQ family.

Nucleotide-binding protein. The protein is Nucleotide-binding protein YajQ of Salmonella heidelberg (strain SL476).